A 348-amino-acid chain; its full sequence is Fructose-1,6-bisphosphatase class 1 2 (348 aa).

Residues Glu-93, Asp-117, Leu-119, and Asp-120 each coordinate Mg(2+). Residues 120–123 (DGSS), Asn-213, Tyr-244, and Lys-274 contribute to the substrate site. A Mg(2+)-binding site is contributed by Glu-280.

Belongs to the FBPase class 1 family. As to quaternary structure, homotetramer. It depends on Mg(2+) as a cofactor.

Its subcellular location is the cytoplasm. It carries out the reaction beta-D-fructose 1,6-bisphosphate + H2O = beta-D-fructose 6-phosphate + phosphate. The protein operates within carbohydrate biosynthesis; gluconeogenesis. The chain is Fructose-1,6-bisphosphatase class 1 2 from Christiangramia forsetii (strain DSM 17595 / CGMCC 1.15422 / KT0803) (Gramella forsetii).